A 210-amino-acid polypeptide reads, in one-letter code: Synaptosomal-associated protein 23 (210 aa).

M1 bears the N-acetylmethionine mark. S5, S20, S23, and S34 each carry phosphoserine. One can recognise a t-SNARE coiled-coil homology 1 domain in the interval 14-76 (HQVTDESLES…REAEKTLTEL (63 aa)). A coiled-coil region spans residues 23 to 76 (STRRILGLAIESQDAGIKTITMLDEQGEQLNRIEEGMDQINKDMREAEKTLTEL). S-palmitoyl cysteine attachment occurs at residues C79, C80, C83, C85, and C87. The disordered stretch occupies residues 104 to 135 (GDGGDNSPSNVVSKQPSRITNGQPQQTTGAAS). The span at 109–133 (NSPSNVVSKQPSRITNGQPQQTTGA) shows a compositional bias: polar residues. Phosphoserine occurs at positions 110 and 160. Residues 145–207 (DAREDEMEEN…DIANTRAKKL (63 aa)) enclose the t-SNARE coiled-coil homology 2 domain.

This sequence belongs to the SNAP-25 family. In terms of assembly, homotetramer (via coiled-coil domain), also forms heterotetramers with STX4 and VAMP3. Found in a complex with VAMP8 and STX1A. Found in a complex with VAMP8 and STX4 in pancreas. Interacts simultaneously with SNAPIN and SYN4. Interacts with STX1A. Interacts with STX12. Interacts tightly to multiple syntaxins and synaptobrevins/VAMPs. Interacts with ZDHHC13 (via ANK repeats). Interacts with ZDHHC17 (via ANK repeats). (Microbial infection) Targeted and hydrolyzed by C.botulinum neurotoxin type A (BoNT/A, botA) which hydrolyzes the 202-Thr-|-Arg-203 bond; the in vitro reaction is not highly efficient. In terms of processing, (Microbial infection) Targeted and hydrolyzed by C.botulinum neurotoxin type E (BoNT/E) which hydrolyzes the 185-Arg-|-Ile-186 bond; the in vitro reaction is more efficient than that of BoNT/A. In terms of tissue distribution, expressed in non-neuronal tissues.

It localises to the cell membrane. Its subcellular location is the synapse. It is found in the synaptosome. In terms of biological role, essential component of the high affinity receptor for the general membrane fusion machinery and an important regulator of transport vesicle docking and fusion. The protein is Synaptosomal-associated protein 23 (Snap23) of Mus musculus (Mouse).